Here is a 408-residue protein sequence, read N- to C-terminus: Protein ZNF365 (408 aa).

S16 carries the post-translational modification Phosphoserine. Residues F26 to H51 form a C2H2-type; degenerate zinc finger. 2 positions are modified to phosphoserine: S139 and S146. Residues V170–A298 adopt a coiled-coil conformation. T176 is modified (phosphothreonine). Residue S370 is modified to Phosphoserine.

In terms of assembly, homodimers. Interacts with NDE1 and NDEL1. Interacts with DISC1. Interacts with PARP1. Interacts with MCRS1. As to expression, expressed in cerebral cortex, hippocampus, olfactory tubercle and striatum.

The protein resides in the cytoplasm. It is found in the cytoskeleton. It localises to the microtubule organizing center. The protein localises to the centrosome. Involved in the positive regulation of oligodendrocyte differentiation during postnatal growth. Involved in the morphogenesis of basket cells in the somatosensory cortex during embryogenesis. Involved in dendritic arborization, morphogenesis of spine density dendrite, and establishment of postsynaptic dendrite density in cortical pyramidal neurons. Involved in the regulation of neurogenesis. Negatively regulates neurite outgrowth. Involved in homologous recombination (HR) repair pathway. Required for proper resolution of DNA double-strand breaks (DSBs) by HR. Is required for recovery of stalled replication forks, and directly contributes to genomic stability. Interacts with PARP1 and mediates MRE11-dependent DNA end resection during replication fork recovery. Contributes to genomic stability by preventing telomere dysfunction. This is Protein ZNF365 (Znf365) from Rattus norvegicus (Rat).